A 184-amino-acid polypeptide reads, in one-letter code: Large ribosomal subunit protein uL5 (184 aa).

It belongs to the universal ribosomal protein uL5 family. In terms of assembly, part of the 50S ribosomal subunit; part of the 5S rRNA/L5/L18/L25 subcomplex. Contacts the 5S rRNA and the P site tRNA. Forms a bridge to the 30S subunit in the 70S ribosome.

This is one of the proteins that bind and probably mediate the attachment of the 5S RNA into the large ribosomal subunit, where it forms part of the central protuberance. In the 70S ribosome it contacts protein S13 of the 30S subunit (bridge B1b), connecting the 2 subunits; this bridge is implicated in subunit movement. Contacts the P site tRNA; the 5S rRNA and some of its associated proteins might help stabilize positioning of ribosome-bound tRNAs. In Corynebacterium kroppenstedtii (strain DSM 44385 / JCM 11950 / CIP 105744 / CCUG 35717), this protein is Large ribosomal subunit protein uL5.